The chain runs to 192 residues: Neurogenic differentiation factor 1 (192 aa).

The region spanning 19–71 is the bHLH domain; the sequence is VRRVKANGRERARMHGLNNALDMLREYIPITTQHQKLSKIETLRLARNYIDAL. Residues 116-192 are disordered; the sequence is PSQFDIFSDP…SHQNTFNYSP (77 aa). A compositionally biased stretch (low complexity) spans 139-163; it reads SSFSSSSPSSSCSPPQYYYSPTQPS.

Expressed in neuroblasts of the AB lineage. More specifically in precursors of the embryonic ventral cord motor neurons. Expressed to a lesser degree in the EMS lineage which generates mostly endoderm and mesoderm tissues.

The protein localises to the nucleus. Acts as a transcriptional regulator whose activity is required for several aspects of motor neuron fate specification, including cell division patterns, proper spatiotemporal expression of fate-specific markers, and normal axonal morphology and pathfinding. Involved in regulating glial specification. The polypeptide is Neurogenic differentiation factor 1 (cnd-1) (Caenorhabditis elegans).